Reading from the N-terminus, the 594-residue chain is Grainyhead-like protein 3 homolog (594 aa).

Transcription activation stretches follow at residues 25–75 and 28–91; these read NDDE…RIIT and EAWS…SCIE. Residues 220–453 form the Grh/CP2 DB domain; it reads ANRDFECTLE…DMETHPVLFI (234 aa). The interval 483–503 is disordered; that stretch reads SSQSFPESFEAPPSKQQTNED.

The protein belongs to the grh/CP2 family. Grainyhead subfamily.

It localises to the nucleus. Functionally, transcription factor playing important roles in primary neurulation and in the differentiation of stratified epithelia of both ectodermal and endodermal origin. Binds directly to the consensus DNA sequence 5'-AACCGGTT-3' acting as an activator and repressor on distinct target genes. The protein is Grainyhead-like protein 3 homolog (grhl3) of Xenopus tropicalis (Western clawed frog).